The chain runs to 371 residues: Cytochrome b (371 aa).

A run of 4 helical transmembrane segments spans residues 25-45 (FGSM…FLAV), 69-90 (WMMQ…YIHI), 105-125 (WMSG…GYVL), and 170-190 (FFAL…LHII). Heme b-binding residues include histidine 75 and histidine 89. Heme b contacts are provided by histidine 174 and histidine 188. Residue histidine 193 participates in a ubiquinone binding. 4 helical membrane-spanning segments follow: residues 218-238 (HKDL…VSFF), 280-300 (LGGA…PFTH), 312-332 (LSQL…WAAT), and 339-358 (FIAI…LSIP).

This sequence belongs to the cytochrome b family. In terms of assembly, the cytochrome bc1 complex contains 3 respiratory subunits (MT-CYB, CYC1 and UQCRFS1), 2 core proteins (UQCRC1 and UQCRC2) and probably 6 low-molecular weight proteins. Heme b is required as a cofactor.

It localises to the mitochondrion inner membrane. In terms of biological role, component of the ubiquinol-cytochrome c reductase complex (complex III or cytochrome b-c1 complex) that is part of the mitochondrial respiratory chain. The b-c1 complex mediates electron transfer from ubiquinol to cytochrome c. Contributes to the generation of a proton gradient across the mitochondrial membrane that is then used for ATP synthesis. The sequence is that of Cytochrome b (MT-CYB) from Liasis olivaceus (Olive python).